The chain runs to 141 residues: Large ribosomal subunit protein uL11 (141 aa).

The protein belongs to the universal ribosomal protein uL11 family. Part of the ribosomal stalk of the 50S ribosomal subunit. Interacts with L10 and the large rRNA to form the base of the stalk. L10 forms an elongated spine to which L12 dimers bind in a sequential fashion forming a multimeric L10(L12)X complex. Post-translationally, one or more lysine residues are methylated.

Functionally, forms part of the ribosomal stalk which helps the ribosome interact with GTP-bound translation factors. This Cyanothece sp. (strain PCC 7425 / ATCC 29141) protein is Large ribosomal subunit protein uL11.